The primary structure comprises 301 residues: Porphobilinogen deaminase (301 aa).

Residue Cys-235 is modified to S-(dipyrrolylmethanemethyl)cysteine.

The protein belongs to the HMBS family. Monomer. Requires dipyrromethane as cofactor.

The catalysed reaction is 4 porphobilinogen + H2O = hydroxymethylbilane + 4 NH4(+). It functions in the pathway porphyrin-containing compound metabolism; protoporphyrin-IX biosynthesis; coproporphyrinogen-III from 5-aminolevulinate: step 2/4. Functionally, tetrapolymerization of the monopyrrole PBG into the hydroxymethylbilane pre-uroporphyrinogen in several discrete steps. The polypeptide is Porphobilinogen deaminase (Thermus thermophilus (strain ATCC BAA-163 / DSM 7039 / HB27)).